The sequence spans 49 residues: Large ribosomal subunit protein bL33 (49 aa).

Belongs to the bacterial ribosomal protein bL33 family.

In Streptococcus gordonii (strain Challis / ATCC 35105 / BCRC 15272 / CH1 / DL1 / V288), this protein is Large ribosomal subunit protein bL33.